The following is a 309-amino-acid chain: Probable lipid kinase YegS-like (309 aa).

A DAGKc domain is found at 1-134; that stretch reads MAPSHWRLIL…VDLLRIDADH (134 aa). ATP contacts are provided by residues Thr-39, 65–71, and Thr-96; that span reads GDGTLSE. Mg(2+) contacts are provided by Leu-219, Asp-222, and Leu-224. Glu-280 functions as the Proton acceptor in the catalytic mechanism.

It belongs to the diacylglycerol/lipid kinase family. YegS lipid kinase subfamily. It depends on Mg(2+) as a cofactor. Ca(2+) serves as cofactor.

Its subcellular location is the cytoplasm. Its function is as follows. Probably phosphorylates lipids; the in vivo substrate is unknown. In Xanthomonas axonopodis pv. citri (strain 306), this protein is Probable lipid kinase YegS-like.